The chain runs to 361 residues: Large ribosomal subunit protein mL45 (361 aa).

This sequence belongs to the mitochondrion-specific ribosomal protein mL45 family.

Its subcellular location is the mitochondrion. The sequence is that of Large ribosomal subunit protein mL45 (mrpl-45) from Caenorhabditis briggsae.